A 378-amino-acid chain; its full sequence is Mannitol-1-phosphate 5-dehydrogenase (378 aa).

4 to 15 contributes to the NAD(+) binding site; it reads SVHFGAGNIGRG.

This sequence belongs to the mannitol dehydrogenase family.

It catalyses the reaction D-mannitol 1-phosphate + NAD(+) = beta-D-fructose 6-phosphate + NADH + H(+). This is Mannitol-1-phosphate 5-dehydrogenase from Streptococcus pneumoniae (strain JJA).